Here is a 249-residue protein sequence, read N- to C-terminus: Proteasome activator complex subunit 1 (249 aa).

The disordered stretch occupies residues 60–102 (PLDIPVPDPVKEKEKEERKKQQEKEDKDEKKKGEDEDKGPPCG). A compositionally biased stretch (basic and acidic residues) spans 68 to 98 (PVKEKEKEERKKQQEKEDKDEKKKGEDEDKG).

It belongs to the PA28 family. Heterodimer of PSME1 and PSME2, which forms a hexameric ring. PSME1 can form homoheptamers.

In terms of biological role, implicated in immunoproteasome assembly and required for efficient antigen processing. The PA28 activator complex enhances the generation of class I binding peptides by altering the cleavage pattern of the proteasome. The protein is Proteasome activator complex subunit 1 (PSME1) of Homo sapiens (Human).